The sequence spans 240 residues: Lysoplasmalogenase TMEM86A (240 aa).

The Cytoplasmic portion of the chain corresponds to 1-21 (MVSPVTVVKSEGPKLVPFFKA). Residues 22-42 (TCVYFVLWLPSSSPSWVSALI) traverse the membrane as a helical segment. Residue Lys-43 is a topological domain, extracellular. The helical transmembrane segment at 44–64 (CLPIFCLWLFLLAHGLGFLLT) threads the bilayer. Residues 65–70 (HPSATR) are Cytoplasmic-facing. Residues 71 to 91 (IFVGLVFSAIGDAFLIWQDQG) form a helical membrane-spanning segment. Tyr-92 is a topological domain (extracellular). The helical transmembrane segment at 93–113 (FVHGMLMFAVTHMLYASAFGM) threads the bilayer. Residues 114 to 115 (RP) lie on the Cytoplasmic side of the membrane. Residues 116-136 (LGLRTGLLMVILSGLCYAFLY) traverse the membrane as a helical segment. Over 137-138 (PN) the chain is Extracellular. A helical membrane pass occupies residues 139–159 (LTGAFTYVVGVYVAIIGFMGW). The Cytoplasmic portion of the chain corresponds to 160–174 (RAMAGLQLVGAAWRW). A helical transmembrane segment spans residues 175–195 (TELAAGTGALLFIVSDLTIAL). Over 196–206 (DKFCFPVPYSR) the chain is Extracellular. Residues 207-227 (ALIMSTYYAAQMLIALSAVES) form a helical membrane-spanning segment. Residues 228-240 (REPVEDYRLSKAK) are Cytoplasmic-facing.

This sequence belongs to the TMEM86 family.

It localises to the endoplasmic reticulum membrane. The catalysed reaction is a 1-O-(1Z-alkenyl)-sn-glycero-3-phosphocholine + H2O = a 2,3-saturated aldehyde + sn-glycerol 3-phosphocholine. It catalyses the reaction a 1-O-(1Z-alkenyl)-sn-glycero-3-phosphoethanolamine + H2O = a 2,3-saturated aldehyde + sn-glycero-3-phosphoethanolamine. Its function is as follows. Catalyzes the hydrolysis of the vinyl ether bond of choline or ethanolamine lysoplasmalogens, forming fatty aldehyde and glycerophosphocholine or glycerophosphoethanolamine, respectively and is specific for the sn-2-deacylated (lyso) form of plasmalogen. Plays an important role in lysoplasmalogen metabolism in the adipocyte tissue and macrophages. The sequence is that of Lysoplasmalogenase TMEM86A (TMEM86A) from Bos taurus (Bovine).